The sequence spans 602 residues: Leishmanolysin (602 aa).

The first 39 residues, 1–39 (MSVDSSSTHRRRCVAARLVRLAAAGAAVTVAVGTAAAWA), serve as a signal peptide directing secretion. A propeptide spans 40 to 100 (HAGALQHRCV…DPRPGSARSV (61 aa)) (activation peptide). Cystine bridges form between Cys-125-Cys-142 and Cys-191-Cys-230. Residue His-264 participates in Zn(2+) binding. Glu-265 is an active-site residue. Zn(2+) is bound at residue His-268. An N-linked (GlcNAc...) asparagine glycan is attached at Asn-300. Intrachain disulfides connect Cys-314/Cys-386, Cys-393/Cys-455, Cys-406/Cys-425, Cys-415/Cys-489, Cys-466/Cys-510, Cys-515/Cys-565, and Cys-535/Cys-558. Residue His-334 participates in Zn(2+) binding. A glycan (N-linked (GlcNAc...) asparagine) is linked at Asn-407. N-linked (GlcNAc...) asparagine glycosylation occurs at Asn-534. Asn-577 is lipidated: GPI-anchor amidated asparagine. Residues 578–602 (TAAGRRGPRAAATALLVAALLAVAL) constitute a propeptide, removed in mature form.

This sequence belongs to the peptidase M8 family. Zn(2+) is required as a cofactor. Post-translationally, the phosphatidylinositol moiety of the GPI-anchor contains a fully saturated, unbranched 1-O-alkyl chain (mainly C24:0) and a mixture of fully saturated unbranched 2-O-acyl chains (C12:0, C14:0, C16:0, and C18:0).

The protein localises to the cell membrane. It catalyses the reaction Preference for hydrophobic residues at P1 and P1' and basic residues at P2' and P3'. A model nonapeptide is cleaved at -Ala-Tyr-|-Leu-Lys-Lys-.. Its function is as follows. Has an integral role during the infection of macrophages in the mammalian host. This chain is Leishmanolysin (gp63), found in Leishmania major.